A 269-amino-acid chain; its full sequence is Aminoglycoside N(3)-acetyltransferase III (269 aa).

This sequence belongs to the antibiotic N-acetyltransferase family.

It carries out the reaction a 2-deoxystreptamine antibiotic + acetyl-CoA = an N(3)-acetyl-2-deoxystreptamine antibiotic + CoA + H(+). In terms of biological role, resistance to antibiotics containing the 2-deoxy-streptamine ring including gentamicin, kanamycin, tobramycin, neomycin and apramycin. This is Aminoglycoside N(3)-acetyltransferase III (aac3-Vb) from Serratia marcescens.